Reading from the N-terminus, the 360-residue chain is Peptide chain release factor 1 (360 aa).

Gln-235 is modified (N5-methylglutamine).

This sequence belongs to the prokaryotic/mitochondrial release factor family. Post-translationally, methylated by PrmC. Methylation increases the termination efficiency of RF1.

The protein localises to the cytoplasm. Peptide chain release factor 1 directs the termination of translation in response to the peptide chain termination codons UAG and UAA. The protein is Peptide chain release factor 1 of Bordetella parapertussis (strain 12822 / ATCC BAA-587 / NCTC 13253).